The sequence spans 336 residues: Fructose-1,6-bisphosphatase class 1 (336 aa).

The Mg(2+) site is built by E90, D112, L114, and D115. Residues 115-118, N211, and K277 contribute to the substrate site; that span reads DGSS. Residue E283 coordinates Mg(2+).

It belongs to the FBPase class 1 family. Homotetramer. Mg(2+) serves as cofactor.

Its subcellular location is the cytoplasm. The catalysed reaction is beta-D-fructose 1,6-bisphosphate + H2O = beta-D-fructose 6-phosphate + phosphate. It participates in carbohydrate biosynthesis; gluconeogenesis. This is Fructose-1,6-bisphosphatase class 1 from Pseudomonas fluorescens (strain SBW25).